Consider the following 578-residue polypeptide: Cyclin-SDS (578 aa).

The tract at residues 1–31 (MKEIAMRNSKRKPEPTPFAGKKLRSTRLRRK) is disordered. Residues 21–31 (KKLRSTRLRRK) show a composition bias toward basic residues.

This sequence belongs to the cyclin family. As to quaternary structure, may interact with CDKA-1 and CDKB1-1.

Functionally, meiosis-specific cyclin. Required for normal homolog synapsis and recombination in early to mid-prophase 1. May regulate the timing of sister chromatid separation. This Arabidopsis thaliana (Mouse-ear cress) protein is Cyclin-SDS (SDS).